A 450-amino-acid chain; its full sequence is Tubulin alpha chain (450 aa).

A GTP-binding site is contributed by Gln11. At Lys40 the chain carries N6-acetyllysine. Glu71, Ser140, Gly144, Thr145, Thr179, Asn206, and Asn228 together coordinate GTP. Glu71 serves as a coordination point for Mg(2+). Residue Glu254 is part of the active site.

This sequence belongs to the tubulin family. In terms of assembly, dimer of alpha and beta chains. A typical microtubule is a hollow water-filled tube with an outer diameter of 25 nm and an inner diameter of 15 nM. Alpha-beta heterodimers associate head-to-tail to form protofilaments running lengthwise along the microtubule wall with the beta-tubulin subunit facing the microtubule plus end conferring a structural polarity. Microtubules usually have 13 protofilaments but different protofilament numbers can be found in some organisms and specialized cells. It depends on Mg(2+) as a cofactor. In terms of processing, undergoes a tyrosination/detyrosination cycle, the cyclic removal and re-addition of a C-terminal tyrosine residue by the enzymes tubulin tyrosine carboxypeptidase (TTCP) and tubulin tyrosine ligase (TTL), respectively. Post-translationally, acetylation of alpha chains at Lys-40 stabilizes microtubules and affects affinity and processivity of microtubule motors. This modification has a role in multiple cellular functions, ranging from cell motility, cell cycle progression or cell differentiation to intracellular trafficking and signaling.

The protein resides in the cytoplasm. It is found in the cytoskeleton. It carries out the reaction GTP + H2O = GDP + phosphate + H(+). Its function is as follows. Tubulin is the major constituent of microtubules, a cylinder consisting of laterally associated linear protofilaments composed of alpha- and beta-tubulin heterodimers. Microtubules grow by the addition of GTP-tubulin dimers to the microtubule end, where a stabilizing cap forms. Below the cap, tubulin dimers are in GDP-bound state, owing to GTPase activity of alpha-tubulin. In Haemonchus contortus (Barber pole worm), this protein is Tubulin alpha chain.